A 103-amino-acid chain; its full sequence is UPF0473 protein LVIS_1220 (103 aa).

The protein belongs to the UPF0473 family.

The sequence is that of UPF0473 protein LVIS_1220 from Levilactobacillus brevis (strain ATCC 367 / BCRC 12310 / CIP 105137 / JCM 1170 / LMG 11437 / NCIMB 947 / NCTC 947) (Lactobacillus brevis).